Here is a 751-residue protein sequence, read N- to C-terminus: Dachshund homolog 1 (751 aa).

The segment at 1 to 178 is disordered; the sequence is MAVPAALIPP…PSPVENTPQN (178 aa). 2 stretches are compositionally biased toward low complexity: residues 20–53 and 61–74; these read ISTS…SGPT and ASSA…TVTS. Composition is skewed to gly residues over residues 75–97 and 107–119; these read PGGG…GGGS and SSGG…GGGA. Low complexity predominate over residues 120 to 156; that stretch reads SSTPITASTGSSSSSSSSSSSSSSSSSSSSSSSSSSS. Polar residues predominate over residues 167–178; it reads STPSPVENTPQN. Residues 182–268 form a DACHbox-N region; it reads KMVDLRGAKV…LISRKDFETL (87 aa). The tract at residues 182–377 is interaction with SIX6 and HDAC3; the sequence is KMVDLRGAKV…VGSSGGSWDK (196 aa). Disordered stretches follow at residues 273–295, 351–393, 467–525, and 537–556; these read TNAS…PENS, SNNQ…APVA, SPPS…RIPV, and MGLS…AGHD. Composition is skewed to polar residues over residues 285 to 294 and 351 to 369; these read RTQSVTSPEN and SNNQ…SSVG. Phosphoserine is present on Ser484. A compositionally biased stretch (low complexity) spans 499 to 517; sequence SHPSSHRSSSVSSSPARTE. The interval 609–689 is DACHbox-C; it reads SSIETLLTNI…KAKRKLQEAL (81 aa). Residues 620–699 are interaction with SIN3A; sequence GLLKVAIDNA…EFETKRREQA (80 aa). Residues 623–711 adopt a coiled-coil conformation; that stretch reads KVAIDNARAQ…TLKQAASADS (89 aa).

The protein belongs to the DACH/dachshund family. Interacts with SIX1, SIX6 and EYA3. Interacts with NCOR1 and HDAC3 through its N-terminus. Interacts with SIN3A through its C-terminus. Interacts with SMAD3 and SMAD4. In terms of tissue distribution, expressed at higher levels in adult kidney and lung, and at lower levels in brain and testis. Expressed in embryonal kidneys, eyes, cochleae and limb buds.

Its subcellular location is the nucleus. Functionally, transcription factor that is involved in regulation of organogenesis. Seems to be a regulator of SIX1, SIX6 and probably SIX5. Corepression of precursor cell proliferation in myoblasts by SIX1 is switched to coactivation through recruitment of EYA3 to the SIX1-DACH1 complex. Transcriptional activation also seems to involve association of CREBBP. Seems to act as a corepressor of SIX6 in regulating proliferation by directly repressing cyclin-dependent kinase inhibitors, including the p27Kip1 promoter. Inhibits TGF-beta signaling through interaction with SMAD4 and NCOR1. Binds to chromatin DNA via its DACHbox-N domain. This chain is Dachshund homolog 1 (Dach1), found in Mus musculus (Mouse).